We begin with the raw amino-acid sequence, 159 residues long: Immunoglobulin J chain (159 aa).

Residues 1 to 22 (MKNHLLFWGVLAVFIKAVHVKA) form the signal peptide. Q23 bears the Pyrrolidone carboxylic acid mark. 3 cysteine pairs are disulfide-bonded: C35–C123, C94–C114, and C131–C156. A glycan (N-linked (GlcNAc...) (complex) asparagine) is linked at N71.

As to quaternary structure, part of the secretory IgA (sIgA) complex that consists of two, four or five IgA monomers, and two additional non-Ig polypeptides, namely the JCHAIN and the secretory component (the proteolytic product of PIGR). Part of the secretory IgM (sIgM) complex that consists of five IgM monomers, and two additional non-Ig polypeptides, namely the JCHAIN and the secretory component (the proteolytic product of PIGR). JCHAIN-containing IgM interacts (via CH4 domain) with FCRM (via Ig-like domain).

The protein resides in the secreted. Serves to link two monomer units of either IgM or IgA. In the case of IgM, the J chain-joined dimer is a nucleating unit for the IgM pentamer, and in the case of IgA it induces dimers and/or larger polymers. It also helps to bind these immunoglobulins to secretory component. The polypeptide is Immunoglobulin J chain (Homo sapiens (Human)).